A 542-amino-acid polypeptide reads, in one-letter code: Chaperonin GroEL 2 (542 aa).

ATP-binding positions include threonine 30–proline 33, lysine 51, aspartate 87–threonine 91, glycine 415, and aspartate 496.

The protein belongs to the chaperonin (HSP60) family. As to quaternary structure, forms a cylinder of 14 subunits composed of two heptameric rings stacked back-to-back. Interacts with the co-chaperonin GroES.

The protein resides in the cytoplasm. The catalysed reaction is ATP + H2O + a folded polypeptide = ADP + phosphate + an unfolded polypeptide.. In terms of biological role, together with its co-chaperonin GroES, plays an essential role in assisting protein folding. The GroEL-GroES system forms a nano-cage that allows encapsulation of the non-native substrate proteins and provides a physical environment optimized to promote and accelerate protein folding. This chain is Chaperonin GroEL 2, found in Rhizobium leguminosarum.